Consider the following 147-residue polypeptide: Ribonuclease 4 (147 aa).

The N-terminal stretch at 1 to 28 is a signal peptide; that stretch reads MDIQRTQSLLLLLLLTLLGLGLVQPSYG. Gln29 bears the Pyrrolidone carboxylic acid mark. The dUMP site is built by Arg35, His40, Lys68, Asn71, and Thr72. The Proton acceptor role is filled by His40. 4 disulfides stabilise this stretch: Cys53–Cys109, Cys67–Cys120, Cys85–Cys135, and Cys92–Cys99. His144 functions as the Proton donor in the catalytic mechanism. Position 145 (Phe145) interacts with dUMP.

The protein belongs to the pancreatic ribonuclease family.

It localises to the secreted. Functionally, cleaves preferentially after uridine bases. Has antimicrobial activity against uropathogenic E.coli (UPEC). Probably contributes to urinary tract sterility. In Rattus norvegicus (Rat), this protein is Ribonuclease 4 (Rnase4).